Here is a 150-residue protein sequence, read N- to C-terminus: Transmembrane protein PMIS2 (150 aa).

Over residues 1–12 (MALKPPSATQPA) the composition is skewed to low complexity. The disordered stretch occupies residues 1 to 61 (MALKPPSATQ…EPQEPTQTPE (61 aa)). The segment covering 13 to 22 (PNAPATPDAP) has biased composition (pro residues). Low complexity predominate over residues 23–61 (PTTGDPGASAAPGSPTTTGGPGAPAEVPQEPQEPTQTPE). A run of 2 helical transmembrane segments spans residues 71-91 (LCLT…ALYF) and 130-150 (GWFG…LVLY).

Belongs to the CD225/Dispanin family.

Its subcellular location is the membrane. Functionally, may play a role in spermatozoa mobility. The protein is Transmembrane protein PMIS2 of Homo sapiens (Human).